Here is a 159-residue protein sequence, read N- to C-terminus: Putative pre-16S rRNA nuclease (159 aa).

This sequence belongs to the YqgF nuclease family.

The protein resides in the cytoplasm. Its function is as follows. Could be a nuclease involved in processing of the 5'-end of pre-16S rRNA. This chain is Putative pre-16S rRNA nuclease, found in Thermobifida fusca (strain YX).